Here is a 116-residue protein sequence, read N- to C-terminus: Large ribosomal subunit protein uL18 (116 aa).

Belongs to the universal ribosomal protein uL18 family. In terms of assembly, part of the 50S ribosomal subunit; part of the 5S rRNA/L5/L18/L25 subcomplex. Contacts the 5S and 23S rRNAs.

In terms of biological role, this is one of the proteins that bind and probably mediate the attachment of the 5S RNA into the large ribosomal subunit, where it forms part of the central protuberance. This is Large ribosomal subunit protein uL18 from Pseudomonas syringae pv. tomato (strain ATCC BAA-871 / DC3000).